The following is a 145-amino-acid chain: Glutaconyl-CoA decarboxylase subunit gamma (145 aa).

The segment at 52–82 is disordered; that stretch reads APAPAAAPAAAPAPAAKPAAAAPAGSVTVSA. The segment covering 57-75 has biased composition (low complexity); it reads AAPAAAPAPAAKPAAAAPA. The Biotinyl-binding domain maps to 77-145; that stretch reads SVTVSAPMPG…VATGDVMVIL (69 aa). Lys-112 carries the N6-biotinyllysine modification.

In terms of assembly, heterooctamer consisting of two alpha, two beta, two gamma and two delta subunits. Requires biotin as cofactor.

The enzyme catalyses (2E)-glutaconyl-CoA + Na(+)(in) + H(+) = (2E)-butenoyl-CoA + Na(+)(out) + CO2. Its pathway is amino-acid degradation; L-glutamate degradation via hydroxyglutarate pathway; crotonoyl-CoA from L-glutamate: step 5/5. Biotin carrier subunit of the primary sodium pump glutaconyl-CoA decarboxylase (GCD). The sequence is that of Glutaconyl-CoA decarboxylase subunit gamma (gcdC) from Acidaminococcus fermentans (strain ATCC 25085 / DSM 20731 / CCUG 9996 / CIP 106432 / VR4).